The following is a 704-amino-acid chain: mRNA (2'-O-methyladenosine-N(6)-)-methyltransferase (704 aa).

The interval 1–33 (MANENHGSPREEASLLSHSPGTSNQSQPCSPKP) is disordered. Over residues 16–29 (LSHSPGTSNQSQPC) the composition is skewed to polar residues. Serine 30 is modified (phosphoserine). The 35-residue stretch at 43–77 (ELVHAGWEKCWSRRENRPYYFNRFTNQSLWEMPVL) folds into the WW domain. The segment at 88–151 (GLNATPLPQD…PSSPSIPGTP (64 aa)) is disordered. Residues 109–113 (KPRKR) carry the Nuclear localization signal motif. Residue serine 116 is modified to Phosphoserine. Residues 136-149 (PTGQSVPSSPSIPG) are compositionally biased toward polar residues. Residue threonine 152 is modified to Phosphothreonine. Residues arginine 235 and arginine 265 each coordinate substrate. S-adenosyl-L-methionine is bound at residue 553 to 556 (NPPF). Substrate is bound by residues glutamate 558 and 588 to 592 (WREPP). 614 to 616 (FEH) provides a ligand contact to S-adenosyl-L-methionine. The interval 663–704 (LSAAYRQSGRSHSSGSSSSSSSEAKDRDSGREQGPSREPHPT) is disordered. Residues 669–684 (QSGRSHSSGSSSSSSS) carry the Nuclear localization signal motif. Low complexity predominate over residues 670–684 (SGRSHSSGSSSSSSS). A compositionally biased stretch (basic and acidic residues) spans 685-704 (EAKDRDSGREQGPSREPHPT).

This sequence belongs to the CAPAM family. In terms of assembly, interacts with POLR2A; interacts with the phosphorylated C-terminal domain (CTD) of POLR2A. Ubiquitous.

It is found in the nucleus. It carries out the reaction a 5'-end (N(7)-methyl 5'-triphosphoguanosine)-(2'-O-methyladenosine) in mRNA + S-adenosyl-L-methionine = a 5'-end (N(7)-methyl 5'-triphosphoguanosine)-(N(6),2'-O-dimethyladenosine) in mRNA + S-adenosyl-L-homocysteine + H(+). With respect to regulation, cap-specific adenosine methyltransferase activity is inhibited by zinc. Cap-specific adenosine methyltransferase that catalyzes formation of N(6),2'-O-dimethyladenosine cap (m6A(m)) by methylating the adenosine at the second transcribed position of capped mRNAs. Recruited to the early elongation complex of RNA polymerase II (RNAPII) via interaction with POLR2A and mediates formation of m6A(m) co-transcriptionally. This Homo sapiens (Human) protein is mRNA (2'-O-methyladenosine-N(6)-)-methyltransferase.